A 142-amino-acid polypeptide reads, in one-letter code: Cytochrome b5-related protein (142 aa).

Positions 16 to 100 constitute a Cytochrome b5 heme-binding domain; that stretch reads PTYRNSAPVT…IAKYKVRDAY (85 aa). Heme contacts are provided by histidine 59 and histidine 82.

It belongs to the cytochrome b5 family.

Its function is as follows. May play a role in muscle cell metabolism. The protein is Cytochrome b5-related protein (Cyt-b5-r) of Drosophila virilis (Fruit fly).